Here is a 338-residue protein sequence, read N- to C-terminus: D-erythrose-4-phosphate dehydrogenase (338 aa).

Residue 11–12 (RI) coordinates NAD(+). Substrate is bound by residues 153-155 (SCT), Arg-199, 212-213 (TK), and Arg-235. Cys-154 (nucleophile) is an active-site residue. Asn-317 is a binding site for NAD(+).

The protein belongs to the glyceraldehyde-3-phosphate dehydrogenase family. Epd subfamily. As to quaternary structure, homotetramer.

The protein resides in the cytoplasm. The catalysed reaction is D-erythrose 4-phosphate + NAD(+) + H2O = 4-phospho-D-erythronate + NADH + 2 H(+). It functions in the pathway cofactor biosynthesis; pyridoxine 5'-phosphate biosynthesis; pyridoxine 5'-phosphate from D-erythrose 4-phosphate: step 1/5. Functionally, catalyzes the NAD-dependent conversion of D-erythrose 4-phosphate to 4-phosphoerythronate. This chain is D-erythrose-4-phosphate dehydrogenase, found in Shewanella piezotolerans (strain WP3 / JCM 13877).